Reading from the N-terminus, the 218-residue chain is Telomere repeats-binding bouquet formation protein 2 (218 aa).

Positions 117 to 143 (HDRMASSDKENIRPTPEHKQELSKSAE) are disordered.

It belongs to the TERB2 family. As to quaternary structure, component of the MAJIN-TERB1-TERB2 complex, composed of MAJIN, TERB1 and TERB2. As to expression, specifically expressed in germline tissues.

It is found in the chromosome. The protein localises to the telomere. Its subcellular location is the nucleus inner membrane. Its function is as follows. Meiosis-specific telomere-associated protein involved in meiotic telomere attachment to the nucleus inner membrane, a crucial step for homologous pairing and synapsis. Component of the MAJIN-TERB1-TERB2 complex, which promotes telomere cap exchange by mediating attachment of telomeric DNA to the inner nuclear membrane and replacement of the protective cap of telomeric chromosomes: in early meiosis, the MAJIN-TERB1-TERB2 complex associates with telomeric DNA and the shelterin/telosome complex. During prophase, the complex matures and promotes release of the shelterin/telosome complex from telomeric DNA. In Mus musculus (Mouse), this protein is Telomere repeats-binding bouquet formation protein 2.